The following is a 120-amino-acid chain: Large ribosomal subunit protein bL17 (120 aa).

The protein belongs to the bacterial ribosomal protein bL17 family. Part of the 50S ribosomal subunit. Contacts protein L32.

This Bacillus subtilis (strain 168) protein is Large ribosomal subunit protein bL17.